Here is a 516-residue protein sequence, read N- to C-terminus: Flavin-dependent halogenase armH2 (516 aa).

FAD-binding residues include glycine 16, alanine 19, and glutamate 49. 2 residues coordinate chloride: serine 328 and glycine 329. Isoleucine 330 provides a ligand contact to FAD. A disordered region spans residues 440 to 475 (PQANGNGAAKQDAVPAPIPVALSSGAGPEKDAKRRE).

This sequence belongs to the flavin-dependent halogenase family.

The catalysed reaction is melleolide F + FADH2 + chloride + O2 = 6'-chloromelleolide F + FAD + 2 H2O + H(+). Functionally, flavin-dependent halogenase involved in the biosynthesis of melleolides, a range of antifungal and phytotoxic polyketide derivatives composed of an orsellinic acid (OA) moiety esterified to various sesquiterpene alcohols. The halogenase catalyzes the transfer of a single chlorine atom to the melleolide backbone, resulting in a 6'-chloromelleolide product. The enzyme acts on free substrate and does not depend on carrier-protein-dependent acceptor molecules. The polypeptide is Flavin-dependent halogenase armH2 (Armillaria mellea (Honey mushroom)).